Consider the following 154-residue polypeptide: Jupiter microtubule associated homolog 1 (154 aa).

M1 carries the N-acetylmethionine modification. Positions 1 to 19 are enriched in polar residues; sequence MTTTTTFKGVDPNSRNSSR. Residues 1-154 form a disordered region; that stretch reads MTTTTTFKGV…PGGKSSLVLG (154 aa). T2 carries the N-acetylthreonine; in Hematological and neurological expressed 1 protein, N-terminally processed modification. S28 and S31 each carry phosphoserine. Position 54 is a phosphothreonine (T54). 4 positions are modified to phosphoserine: S71, S87, S88, and S92. Polar residues predominate over residues 79-91; sequence SPGTQRSNSSEAS. Basic and acidic residues predominate over residues 96–108; that stretch reads LDLKGEGDMHENV. A compositionally biased stretch (pro residues) spans 125–138; sequence PAAPVPSPVAPAPV. At S131 the chain carries Phosphoserine. K148 is modified (N6-acetyllysine).

The protein belongs to the JUPITER family. In terms of assembly, interacts with the complex composed, at least, of APC, CTNNB1 and GSK3B; the interaction takes place with the inactive form of GSK3B (phosphorylated at 'Ser-9'). In terms of tissue distribution, expressed in yolk sac, fetal brain, brain, spleen and bone marrow.

It localises to the nucleus. It is found in the cytoplasm. Its function is as follows. Modulates negatively AKT-mediated GSK3B signaling. Induces CTNNB1 'Ser-33' phosphorylation and degradation through the suppression of the inhibitory 'Ser-9' phosphorylation of GSK3B, which represses the function of the APC:CTNNB1:GSK3B complex and the interaction with CDH1/E-cadherin in adherent junctions. Plays a role in the regulation of cell cycle and cell adhesion. Has an inhibitory role on AR-signaling pathway through the induction of receptor proteasomal degradation. The protein is Jupiter microtubule associated homolog 1 of Mus musculus (Mouse).